The following is a 300-amino-acid chain: UDP-N-acetylenolpyruvoylglucosamine reductase (300 aa).

Residues 28-193 (KTGGPADWLA…LDATFALKLG (166 aa)) enclose the FAD-binding PCMH-type domain. Arg-172 is a catalytic residue. Catalysis depends on Ser-222, which acts as the Proton donor. The active site involves Glu-292.

Belongs to the MurB family. The cofactor is FAD.

Its subcellular location is the cytoplasm. It catalyses the reaction UDP-N-acetyl-alpha-D-muramate + NADP(+) = UDP-N-acetyl-3-O-(1-carboxyvinyl)-alpha-D-glucosamine + NADPH + H(+). Its pathway is cell wall biogenesis; peptidoglycan biosynthesis. Its function is as follows. Cell wall formation. This Limosilactobacillus fermentum (strain NBRC 3956 / LMG 18251) (Lactobacillus fermentum) protein is UDP-N-acetylenolpyruvoylglucosamine reductase.